A 311-amino-acid polypeptide reads, in one-letter code: Malate dehydrogenase (311 aa).

Residues 7–13 (GAAGGIG) and Asp34 each bind NAD(+). Residues Arg81 and Arg87 each contribute to the substrate site. NAD(+) contacts are provided by residues Asn94 and 117–119 (ITN). Asn119 and Arg153 together coordinate substrate. His177 acts as the Proton acceptor in catalysis. Met227 contacts NAD(+).

Belongs to the LDH/MDH superfamily. MDH type 1 family. In terms of assembly, homodimer.

It catalyses the reaction (S)-malate + NAD(+) = oxaloacetate + NADH + H(+). Its function is as follows. Catalyzes the reversible oxidation of malate to oxaloacetate. This Aliivibrio salmonicida (strain LFI1238) (Vibrio salmonicida (strain LFI1238)) protein is Malate dehydrogenase.